A 239-amino-acid polypeptide reads, in one-letter code: 1-(5-phosphoribosyl)-5-[(5-phosphoribosylamino)methylideneamino] imidazole-4-carboxamide isomerase (239 aa).

Residue Asp8 is the Proton acceptor of the active site. Asp129 acts as the Proton donor in catalysis.

This sequence belongs to the HisA/HisF family.

The protein localises to the cytoplasm. The catalysed reaction is 1-(5-phospho-beta-D-ribosyl)-5-[(5-phospho-beta-D-ribosylamino)methylideneamino]imidazole-4-carboxamide = 5-[(5-phospho-1-deoxy-D-ribulos-1-ylimino)methylamino]-1-(5-phospho-beta-D-ribosyl)imidazole-4-carboxamide. Its pathway is amino-acid biosynthesis; L-histidine biosynthesis; L-histidine from 5-phospho-alpha-D-ribose 1-diphosphate: step 4/9. This is 1-(5-phosphoribosyl)-5-[(5-phosphoribosylamino)methylideneamino] imidazole-4-carboxamide isomerase from Pelagibacter ubique (strain HTCC1062).